A 122-amino-acid chain; its full sequence is Large ribosomal subunit protein uL18 (122 aa).

It belongs to the universal ribosomal protein uL18 family. In terms of assembly, part of the 50S ribosomal subunit; part of the 5S rRNA/L5/L18/L25 subcomplex. Contacts the 5S and 23S rRNAs.

Its function is as follows. This is one of the proteins that bind and probably mediate the attachment of the 5S RNA into the large ribosomal subunit, where it forms part of the central protuberance. The polypeptide is Large ribosomal subunit protein uL18 (Prochlorococcus marinus (strain MIT 9515)).